A 206-amino-acid chain; its full sequence is Isopentenyl-diphosphate Delta-isomerase (206 aa).

The Mn(2+) site is built by His-44 and His-51. Residues 49-183 (ALHLAFSCHV…PWAFSPWLVL (135 aa)) form the Nudix hydrolase domain. Cys-86 is a catalytic residue. Cys-86 is a Mg(2+) binding site. His-88 contributes to the Mn(2+) binding site. A Mg(2+)-binding site is contributed by Glu-106. The Mn(2+) site is built by Glu-133 and Glu-135. Glu-135 is a catalytic residue.

Belongs to the IPP isomerase type 1 family. It depends on Mg(2+) as a cofactor. The cofactor is Mn(2+).

It localises to the cytoplasm. It catalyses the reaction isopentenyl diphosphate = dimethylallyl diphosphate. Its pathway is isoprenoid biosynthesis; dimethylallyl diphosphate biosynthesis; dimethylallyl diphosphate from isopentenyl diphosphate: step 1/1. Its function is as follows. Catalyzes the 1,3-allylic rearrangement of the homoallylic substrate isopentenyl (IPP) to its highly electrophilic allylic isomer, dimethylallyl diphosphate (DMAPP). This is Isopentenyl-diphosphate Delta-isomerase from Agromyces mediolanus (Corynebacterium mediolanum).